A 167-amino-acid chain; its full sequence is CDP-archaeol synthase (167 aa).

5 helical membrane-spanning segments follow: residues 4–24 (ILEAFWYILPAYFANSSPVIL), 51–71 (GFLGGLTVGTLIGVIQQIIYP), 80–100 (FKVSFLLALGALVGDLIGSFI), 104–124 (LNLPPGYPAVGLDQWGFLISA), and 139–158 (VLLLLVVTPLIHWGTNVLAY).

Belongs to the CDP-archaeol synthase family. The cofactor is Mg(2+).

Its subcellular location is the cell membrane. The enzyme catalyses 2,3-bis-O-(geranylgeranyl)-sn-glycerol 1-phosphate + CTP + H(+) = CDP-2,3-bis-O-(geranylgeranyl)-sn-glycerol + diphosphate. The protein operates within membrane lipid metabolism; glycerophospholipid metabolism. Its function is as follows. Catalyzes the formation of CDP-2,3-bis-(O-geranylgeranyl)-sn-glycerol (CDP-archaeol) from 2,3-bis-(O-geranylgeranyl)-sn-glycerol 1-phosphate (DGGGP) and CTP. This reaction is the third ether-bond-formation step in the biosynthesis of archaeal membrane lipids. This chain is CDP-archaeol synthase, found in Pyrococcus furiosus (strain ATCC 43587 / DSM 3638 / JCM 8422 / Vc1).